A 321-amino-acid chain; its full sequence is tRNA pseudouridine synthase B (321 aa).

The active-site Nucleophile is the Asp-47.

This sequence belongs to the pseudouridine synthase TruB family. Type 1 subfamily.

It catalyses the reaction uridine(55) in tRNA = pseudouridine(55) in tRNA. In terms of biological role, responsible for synthesis of pseudouridine from uracil-55 in the psi GC loop of transfer RNAs. The protein is tRNA pseudouridine synthase B of Shewanella baltica (strain OS185).